The following is a 354-amino-acid chain: Protein-arginine kinase (354 aa).

The Phosphagen kinase C-terminal domain maps to 24–254; the sequence is IVLSSRIRLA…QQIIQQEKMA (231 aa). ATP-binding positions include 27-31, histidine 92, arginine 125, 176-180, and 207-212; these read SSRIR, RASVM, and RGIYGE. The short motif at 337–342 is the RDXXRA motif of the pArg binding pocket involved in allosteric regulation element; the sequence is RDYRRA.

This sequence belongs to the ATP:guanido phosphotransferase family.

It catalyses the reaction L-arginyl-[protein] + ATP = N(omega)-phospho-L-arginyl-[protein] + ADP + H(+). With respect to regulation, appears to be allosterically activated by the binding of pArg-containing polypeptides to the pArg-binding pocket localized in the C-terminal domain of McsB. Catalyzes the specific phosphorylation of arginine residues in a large number of proteins. Is part of the bacterial stress response system. Protein arginine phosphorylation has a physiologically important role and is involved in the regulation of many critical cellular processes, such as protein homeostasis, motility, competence, and stringent and stress responses, by regulating gene expression and protein activity. The polypeptide is Protein-arginine kinase (Bacillus cereus (strain AH187)).